A 455-amino-acid chain; its full sequence is Probable glucarate dehydratase (455 aa).

The substrate site is built by His42, Thr113, Tyr160, and Lys215. Catalysis depends on Lys217, which acts as the Proton acceptor. Residues Asp245, Glu276, and Asn299 each contribute to the Mg(2+) site. Residue Asp245 to Asn247 coordinates substrate. Residues Asn299, His349 to Asn351, His378, and Arg431 contribute to the substrate site. His349 (proton acceptor) is an active-site residue.

It belongs to the mandelate racemase/muconate lactonizing enzyme family. GlucD subfamily. Mg(2+) is required as a cofactor.

It catalyses the reaction D-glucarate = 5-dehydro-4-deoxy-D-glucarate + H2O. It functions in the pathway carbohydrate acid metabolism; D-glucarate degradation; 2,5-dioxopentanoate from D-glucarate: step 1/2. Catalyzes the dehydration of glucarate to 5-keto-4-deoxy-D-glucarate (5-kdGluc). This Bacillus subtilis (strain 168) protein is Probable glucarate dehydratase (gudD).